A 224-amino-acid polypeptide reads, in one-letter code: Metalloproteinase inhibitor 4 (224 aa).

The first 29 residues, 1 to 29 (MPGSPRPAPSWVLLLRLLALLRPPGLGEA), serve as a signal peptide directing secretion. Position 30 (Cys30) interacts with Zn(2+). Involved in metalloproteinase-binding regions lie at residues 30–33 (CSCA) and 99–100 (SS). Intrachain disulfides connect Cys30–Cys102, Cys32–Cys131, Cys42–Cys156, Cys158–Cys205, Cys163–Cys168, and Cys176–Cys197. In terms of domain architecture, NTR spans 30-156 (CSCAPAHPQQ…SLNHHYHLNC (127 aa)).

It belongs to the protease inhibitor I35 (TIMP) family. Abundant in heart and present at low levels in many other tissues.

It localises to the secreted. Its function is as follows. Complexes with metalloproteinases (such as collagenases) and irreversibly inactivates them by binding to their catalytic zinc cofactor. Known to act on MMP-1, MMP-2, MMP-3, MMP-7 and MMP-9. The chain is Metalloproteinase inhibitor 4 (TIMP4) from Homo sapiens (Human).